The sequence spans 144 residues: Large ribosomal subunit protein uL16 (144 aa).

Residues 1–19 (MLLPKRVKYRRQHRPKTTG) are compositionally biased toward basic residues. The segment at 1 to 23 (MLLPKRVKYRRQHRPKTTGRSKG) is disordered.

The protein belongs to the universal ribosomal protein uL16 family. Part of the 50S ribosomal subunit.

Binds 23S rRNA and is also seen to make contacts with the A and possibly P site tRNAs. This is Large ribosomal subunit protein uL16 from Staphylococcus saprophyticus subsp. saprophyticus (strain ATCC 15305 / DSM 20229 / NCIMB 8711 / NCTC 7292 / S-41).